The sequence spans 420 residues: Septin-8-A (420 aa).

Residues 39–305 (QGFCFNILCV…ELYRRCKLEE (267 aa)) form the Septin-type G domain. Residues 49 to 56 (GETGIGKS) are G1 motif. GTP contacts are provided by residues 49 to 56 (GETGIGKS), Gly104, 185 to 193 (KADTISKSE), Gly239, and Arg254. Residues 101 to 104 (DTVG) form a G3 motif region. The segment at 184–187 (AKAD) is G4 motif. Residues 321–407 (QETYEAKRKE…RRKVAAETLS (87 aa)) adopt a coiled-coil conformation. Residues 393 to 420 (MNAFNRRKVAAETLSLSQPLKKDKDKKN) form a disordered region.

The protein belongs to the TRAFAC class TrmE-Era-EngA-EngB-Septin-like GTPase superfamily. Septin GTPase family.

This Danio rerio (Zebrafish) protein is Septin-8-A (sept8a).